The sequence spans 461 residues: UDP-glycosyltransferase 88B1 (461 aa).

Residues S278, 340 to 341 (WA), 358 to 366 (HCGWNSSLE), and 380 to 383 (YAEQ) contribute to the UDP-alpha-D-glucose site.

The protein belongs to the UDP-glycosyltransferase family.

May glycosylate diterpenes or flavonols in leaves. The protein is UDP-glycosyltransferase 88B1 of Stevia rebaudiana (Stevia).